Consider the following 424-residue polypeptide: Histidinol dehydrogenase (424 aa).

The NAD(+) site is built by tyrosine 127, glutamine 188, and asparagine 211. Serine 234, glutamine 256, and histidine 259 together coordinate substrate. Positions 256 and 259 each coordinate Zn(2+). Catalysis depends on proton acceptor residues glutamate 322 and histidine 323. Histidine 323, aspartate 356, glutamate 410, and histidine 415 together coordinate substrate. Aspartate 356 is a binding site for Zn(2+). A Zn(2+)-binding site is contributed by histidine 415.

This sequence belongs to the histidinol dehydrogenase family. Zn(2+) serves as cofactor.

It carries out the reaction L-histidinol + 2 NAD(+) + H2O = L-histidine + 2 NADH + 3 H(+). It functions in the pathway amino-acid biosynthesis; L-histidine biosynthesis; L-histidine from 5-phospho-alpha-D-ribose 1-diphosphate: step 9/9. In terms of biological role, catalyzes the sequential NAD-dependent oxidations of L-histidinol to L-histidinaldehyde and then to L-histidine. The sequence is that of Histidinol dehydrogenase from Methanococcus maripaludis (strain DSM 14266 / JCM 13030 / NBRC 101832 / S2 / LL).